The chain runs to 250 residues: Aquaporin SIP2-1 (250 aa).

2 helical membrane-spanning segments follow: residues 14–34 (PWLV…GALV) and 55–75 (VALS…TGGA). The NPA 1 signature appears at 78-80 (NPL). 4 helical membrane-spanning segments follow: residues 95–115 (LYLF…ILGV), 132–152 (SVGV…VVIV), 178–200 (FHLL…AWAY), and 211–231 (LLVY…VVTL). The NPA 2 motif lies at 191–193 (NPA).

Belongs to the MIP/aquaporin (TC 1.A.8) family. SIP (TC 1.A.8.10) subfamily. In terms of tissue distribution, expressed in leaves and anthers, and at lower levels in roots.

The protein localises to the membrane. Its function is as follows. Aquaporins facilitate the transport of water and small neutral solutes across cell membranes. This Oryza sativa subsp. japonica (Rice) protein is Aquaporin SIP2-1 (SIP2-1).